Consider the following 542-residue polypeptide: MFS thioclapurine efflux transporter tcpA (542 aa).

Residues 1–10 (MATVGTEEKN) show a composition bias toward basic and acidic residues. The interval 1-24 (MATVGTEEKNPIGSASNTAEPNVT) is disordered. The segment covering 13 to 24 (GSASNTAEPNVT) has biased composition (polar residues). Asparagine 22 carries an N-linked (GlcNAc...) asparagine glycan. 3 consecutive transmembrane segments (helical) span residues 32–52 (SGFK…LCGL), 75–97 (GWYT…KLYT), and 103–123 (MILL…AAAP). An N-linked (GlcNAc...) asparagine glycan is attached at asparagine 124. 6 helical membrane passes run 133–153 (AIAG…LVHA), 161–181 (ALLG…PFIG), 193–213 (CFII…FFVF), 234–254 (IPEI…LQWG), 265–285 (IIAL…LQVL), and 307–327 (IFAL…PIYF). N-linked (GlcNAc...) asparagine glycosylation is present at asparagine 332. The chain crosses the membrane as a helical span at residues 339-359 (GVNVMPLILGFLVMSIISGVI). Asparagine 361 carries N-linked (GlcNAc...) asparagine glycosylation. Helical transmembrane passes span 370-390 (MFLC…FDVG), 396-416 (WIGY…QPIV), 427-447 (VPFG…IFVA), and 500-520 (VLGQ…LGSL).

Belongs to the major facilitator superfamily.

It is found in the cell membrane. In terms of biological role, MFS efflux transporter probably involved in thioclapurine export. This is MFS thioclapurine efflux transporter tcpA from Claviceps purpurea (strain 20.1) (Ergot fungus).